A 284-amino-acid chain; its full sequence is Steroidogenic acute regulatory protein, mitochondrial (284 aa).

The transit peptide at 1 to 62 directs the protein to the mitochondrion; the sequence is MLLATFKLCA…RRSSLLGSQL (62 aa). Residues S56 and S194 each carry the phosphoserine; by PKA modification. Residues 66–279 form the START domain; sequence LYSEQELSYI…LRKRLESSSA (214 aa).

May interact with TSPO.

Its subcellular location is the mitochondrion. The protein operates within steroid metabolism; cholesterol metabolism. In terms of biological role, plays a key role in steroid hormone synthesis by enhancing the metabolism of cholesterol into pregnenolone. Mediates the transfer of cholesterol from the outer mitochondrial membrane to the inner mitochondrial membrane where it is cleaved to pregnenolone. This is Steroidogenic acute regulatory protein, mitochondrial (STAR) from Mesocricetus auratus (Golden hamster).